The sequence spans 490 residues: Aspartyl/glutamyl-tRNA(Asn/Gln) amidotransferase subunit B (490 aa).

This sequence belongs to the GatB/GatE family. GatB subfamily. In terms of assembly, heterotrimer of A, B and C subunits.

The catalysed reaction is L-glutamyl-tRNA(Gln) + L-glutamine + ATP + H2O = L-glutaminyl-tRNA(Gln) + L-glutamate + ADP + phosphate + H(+). It carries out the reaction L-aspartyl-tRNA(Asn) + L-glutamine + ATP + H2O = L-asparaginyl-tRNA(Asn) + L-glutamate + ADP + phosphate + 2 H(+). Allows the formation of correctly charged Asn-tRNA(Asn) or Gln-tRNA(Gln) through the transamidation of misacylated Asp-tRNA(Asn) or Glu-tRNA(Gln) in organisms which lack either or both of asparaginyl-tRNA or glutaminyl-tRNA synthetases. The reaction takes place in the presence of glutamine and ATP through an activated phospho-Asp-tRNA(Asn) or phospho-Glu-tRNA(Gln). The polypeptide is Aspartyl/glutamyl-tRNA(Asn/Gln) amidotransferase subunit B (Synechococcus sp. (strain JA-3-3Ab) (Cyanobacteria bacterium Yellowstone A-Prime)).